A 279-amino-acid chain; its full sequence is Monoacylglycerol lipase (279 aa).

Residue Ser-110 is the Nucleophile of the active site. Active-site charge relay system residues include Asp-226 and His-256.

This sequence belongs to the AB hydrolase superfamily. In terms of assembly, monomer.

The protein localises to the secreted. It is found in the cell wall. The catalysed reaction is a 1-acylglycerol + H2O = glycerol + a fatty acid + H(+). It carries out the reaction Hydrolyzes glycerol monoesters of long-chain fatty acids.. The enzyme catalyses 1-butyrylglycerol + H2O = butanoate + glycerol + H(+). It catalyses the reaction 1-octanoylglycerol + H2O = octanoate + glycerol + H(+). The catalysed reaction is 1-decanoylglycerol + H2O = decanoate + glycerol + H(+). It carries out the reaction 1-dodecanoylglycerol + H2O = dodecanoate + glycerol + H(+). The enzyme catalyses 1-tetradecanoylglycerol + H2O = tetradecanoate + glycerol + H(+). It catalyses the reaction 1-(9Z-octadecenoyl)-glycerol + H2O = glycerol + (9Z)-octadecenoate + H(+). The catalysed reaction is 2-(9Z-octadecenoyl)-glycerol + H2O = glycerol + (9Z)-octadecenoate + H(+). With respect to regulation, inhibited by the serine esterase inhibitors PMSF (100%), E600 (80%) and THL (22%). Virtual screening identified a tautomer of ZINC13451138, known inhibitor for HIV-1 integrase, as a potential inhibitor. Its function is as follows. Involved in the hydrolysis of exogenous host lipids during chronic infection. Catalyzes the hydrolysis of both monoacylglycerols (MAG) and diacylglycerols (DAG), with a preference for MAG. It hydrolyzes 2-MAG, 1-3-MAG and MAG with short, medium and long chain fatty acids such as 1-monobutyroyl-rac-glycerol (MC4), 1-mono-octanoyl-rac-glycerol (MC8), 1-monodecanoyl-rac-glycerol (MC10), 1-monolauroyl-rac-glycerol (MC12), 1-monomyristoyl-rac-glycerol (MC14) and 1-mono-oleyl-rac-glycerol (MC18:1). Also able to hydrolyze DAG with short (DiC6) and medium (DiC10) fatty acid chains, but not with longest fatty acid chains. Can also hydrolyze vinyl laurate (VC12), vinyl butyrate (VC4) and vinyl propionate (VC3). In terms of biological role, induces an inflammatory response and cell apoptosis in the host cells. Increases expression of IL-6, NF-kappaB, TLR-2, TLR-6, TNF-alpha, and MyD88 in mouse alveolar macrophage RAW264.7 cells. Persistent expression induces RAW264.7 cell apoptosis in vitro. This chain is Monoacylglycerol lipase, found in Mycobacterium tuberculosis (strain ATCC 25618 / H37Rv).